The sequence spans 582 residues: MFPAGPPSHSLLRLPLLQLLLLVVQAVGRGLGRASPAGGPLEDVVIERYHIPRACPREVQMGDFVRYHYNGTFEDGKKFDSSYDRNTLVAIVVGVGRLITGMDRGLMGMCVNERRRLIVPPHLGYGSIGLAGLIPPDATLYFDVVLLDVWNKEDTVQVSTLLRPPHCPRMVQDGDFVRYHYNGTLLDGTSFDTSYSKGGTYDTYVGSGWLIKGMDQGLLGMCPGERRKIIIPPFLAYGEKGYGTVIPPQASLVFHVLLIDVHNPKDAVQLETLELPPGCVRRAGAGDFMRYHYNGSLMDGTLFDSSYSRNHTYNTYIGQGYIIPGMDQGLQGACMGERRRITIPPHLAYGENGTGDKIPGSAVLIFNVHVIDFHNPADVVEIRTLSRPSETCNETTKLGDFVRYHYNCSLLDGTQLFTSHDYGAPQEATLGANKVIEGLDTGLQGMCVGERRQLIVPPHLAHGESGARGVPGSAVLLFEVELVSREDGLPTGYLFVWHKDPPANLFEDMDLNKDGEVPPEEFSTFIKAQVSEGKGRLMPGQDPEKTIGDMFQNQDRNQDGKITVDELKLKSDEDEERVHEEL.

The first 26 residues, 1–26 (MFPAGPPSHSLLRLPLLQLLLLVVQA), serve as a signal peptide directing secretion. PPIase FKBP-type domains lie at 62–150 (GDFV…LDVW), 174–262 (GDFV…IDVH), and 286–374 (GDFM…IDFH). 7 N-linked (GlcNAc...) asparagine glycosylation sites follow: N70, N182, N294, N310, N352, N393, and N407. The 88-residue stretch at 399–486 (GDFVRYHYNC…LFEVELVSRE (88 aa)) folds into the PPIase FKBP-type 4 domain. 2 consecutive EF-hand domains span residues 497 to 532 (WHKD…QVSE) and 542 to 577 (DPEK…DEER). 10 residues coordinate Ca(2+): D510, N512, D514, E516, E521, D555, N557, D559, K561, and E566. The segment at 533-582 (GKGRLMPGQDPEKTIGDMFQNQDRNQDGKITVDELKLKSDEDEERVHEEL) is disordered. The span at 556 to 582 (RNQDGKITVDELKLKSDEDEERVHEEL) shows a compositional bias: basic and acidic residues. Positions 579 to 582 (HEEL) match the Prevents secretion from ER motif.

Post-translationally, glycosylated and phosphorylated.

The protein resides in the endoplasmic reticulum lumen. The enzyme catalyses [protein]-peptidylproline (omega=180) = [protein]-peptidylproline (omega=0). Its activity is regulated as follows. Inhibited by both FK506 and rapamycin, but not by cyclosporin A. Functionally, PPIases accelerate the folding of proteins during protein synthesis. The sequence is that of Peptidyl-prolyl cis-trans isomerase FKBP10 (FKBP10) from Homo sapiens (Human).